The primary structure comprises 231 residues: uncharacterized protein (231 aa).

This is an uncharacterized protein from Methanocaldococcus jannaschii (strain ATCC 43067 / DSM 2661 / JAL-1 / JCM 10045 / NBRC 100440) (Methanococcus jannaschii).